The following is a 213-amino-acid chain: MIARLVGFLVEKNSDSAVIDVNGVGYLVQLSGRALDYFSEIEGEITVHIETQIREDSITLFGFASYLERDWFRLLTSVQGVGGKAALAILTALTCDAISVAISSGDKTMICRANGIGPKIAQRIINELKEKPAAIALFSSAKGDHLAVEDISQPAASAHHAGNFMADAVSALLNLGFKPAEAQRVVQLASEELGDQATLDSLVRLALRLSSKH.

The segment at 1-64 is domain I; the sequence is MIARLVGFLV…EDSITLFGFA (64 aa). The domain II stretch occupies residues 65–143; sequence SYLERDWFRL…AIALFSSAKG (79 aa). Residues 144–159 are flexible linker; it reads DHLAVEDISQPAASAH. Residues 160 to 213 form a domain III region; it reads HAGNFMADAVSALLNLGFKPAEAQRVVQLASEELGDQATLDSLVRLALRLSSKH.

The protein belongs to the RuvA family. As to quaternary structure, homotetramer. Forms an RuvA(8)-RuvB(12)-Holliday junction (HJ) complex. HJ DNA is sandwiched between 2 RuvA tetramers; dsDNA enters through RuvA and exits via RuvB. An RuvB hexamer assembles on each DNA strand where it exits the tetramer. Each RuvB hexamer is contacted by two RuvA subunits (via domain III) on 2 adjacent RuvB subunits; this complex drives branch migration. In the full resolvosome a probable DNA-RuvA(4)-RuvB(12)-RuvC(2) complex forms which resolves the HJ.

Its subcellular location is the cytoplasm. In terms of biological role, the RuvA-RuvB-RuvC complex processes Holliday junction (HJ) DNA during genetic recombination and DNA repair, while the RuvA-RuvB complex plays an important role in the rescue of blocked DNA replication forks via replication fork reversal (RFR). RuvA specifically binds to HJ cruciform DNA, conferring on it an open structure. The RuvB hexamer acts as an ATP-dependent pump, pulling dsDNA into and through the RuvAB complex. HJ branch migration allows RuvC to scan DNA until it finds its consensus sequence, where it cleaves and resolves the cruciform DNA. The sequence is that of Holliday junction branch migration complex subunit RuvA from Zymomonas mobilis subsp. mobilis (strain ATCC 31821 / ZM4 / CP4).